A 430-amino-acid chain; its full sequence is Gustatory receptor-like 43a (430 aa).

The Cytoplasmic portion of the chain corresponds to 1 to 31 (MSTGSHSPEAMWSATNFRRHQRKPNQVLHRW). A helical membrane pass occupies residues 32-52 (FFKGSAWIIYAIACGLHFFKL). Residues 53–79 (HYNERTNQVEESQYHRIWSKIVVVLKV) lie on the Extracellular side of the membrane. Residues 80 to 100 (ILLASPYLQYFVLGLGIYIHI) form a helical membrane-spanning segment. Topologically, residues 101–110 (TLVQDSKAQN) are cytoplasmic. The chain crosses the membrane as a helical span at residues 111–131 (FLMSLIVLGIVIGVLRRLLIF). Topologically, residues 132 to 168 (LHLKRDRRFLKHTVNEILHITSALEQKFGMEYKCDST) are extracellular. Residues 169–189 (LLVVYLAKLWILTVMLDSLWY) traverse the membrane as a helical segment. Residues 190–277 (KPYFLSSIFL…RDNVSWLSTS (88 aa)) are Cytoplasmic-facing. Residues 278–298 (VYLMIFTCIFNAELLIECSLF) form a helical membrane-spanning segment. At 299-306 (AGDELENK) the chain is on the extracellular side. The helical transmembrane segment at 307-327 (IYIITDGCLGPVCVPILYVLI) threads the bilayer. Residues 328–396 (LGMCTDRFRD…IILDITCDRE (69 aa)) are Cytoplasmic-facing. A helical transmembrane segment spans residues 397–417 (FVMDYIVTVILTALSLVQYTI). At 418-430 (STGGNISECVTHK) the chain is on the extracellular side. A glycan (N-linked (GlcNAc...) asparagine) is linked at asparagine 422.

It localises to the cell membrane. This is Gustatory receptor-like 43a from Drosophila melanogaster (Fruit fly).